We begin with the raw amino-acid sequence, 316 residues long: ADDLTTLRNGTLDRGITPDCTFNEKDIELHVYSRDKRNGIILKKEILKNYDLFQKSQISHQIAILIHGFLSTGNNENFDAMAKALIEIDNFLVISVDWKKGACNAFASTNDVLGYSQAVGNTRHVGKYVADFTKLLVEQYKVPMSNIRLIGHSLGAHTSGFAGKEVQRLKLGKYKEIIGLDPAGPSFLTSKCPDRLCETDAEYVQAIHTSAILGVYYNVGSVDFYVNYGKSQPGCSEPSCSHTKAVKYLTECIKRECCLIGTPWKSYFSTPKSISQCKRDTCVCVGLNAQSYPAKGSFYVPVEKDAPYCHNEGIKL.

A signal peptide spans 1 to 4 (ADDL). Residues 5–14 (TTLRNGTLDR) constitute a propeptide that is removed on maturation. Cysteines 20 and 103 form a disulfide. Residue Ser-153 is the Nucleophile of the active site. The Charge relay system role is filled by Asp-181. Cystine bridges form between Cys-192-Cys-197 and Cys-235-Cys-240. His-242 acts as the Charge relay system in catalysis. 3 disulfide bridges follow: Cys-257/Cys-284, Cys-258/Cys-309, and Cys-277/Cys-282.

Belongs to the AB hydrolase superfamily. Lipase family. As to expression, expressed by the venom gland.

Its subcellular location is the secreted. The catalysed reaction is a 1,2-diacyl-sn-glycero-3-phosphocholine + H2O = a 2-acyl-sn-glycero-3-phosphocholine + a fatty acid + H(+). Catalyzes the hydrolysis of phosphatidylcholine with phospholipase A1 activity. May act as an allergen and induce hemolytic activity. The polypeptide is Phospholipase A1 4 (Polistes dominula (European paper wasp)).